The sequence spans 367 residues: N-acetylmuramoyl-L-alanine amidase BlyA (367 aa).

The N-acetylmuramoyl-L-alanine amidase domain maps to 24–158; the sequence is VKKCVLHYTA…DITHKNCPAP (135 aa). A disordered region spans residues 178 to 204; that stretch reads SGKSVSKASPTKPTTSSPSSSSAVSGS. A compositionally biased stretch (low complexity) spans 180–204; it reads KSVSKASPTKPTTSSPSSSSAVSGS. SH3b domains follow at residues 202 to 271 and 298 to 367; these read SGSL…YVDV and GKIK…GSTI.

This sequence belongs to the N-acetylmuramoyl-L-alanine amidase 2 family.

It localises to the secreted. The enzyme catalyses Hydrolyzes the link between N-acetylmuramoyl residues and L-amino acid residues in certain cell-wall glycopeptides.. Functionally, autolysins are involved in some important biological processes such as cell separation, cell-wall turnover, competence for genetic transformation, formation of the flagella and sporulation. Involved in prophage SP-beta-mediated cell lysis. The protein is N-acetylmuramoyl-L-alanine amidase BlyA (blyA) of Bacillus subtilis (strain 168).